The sequence spans 314 residues: MSNQLPVINLMGPTASGKTALACELYERGNFELISVDSALVYKDMDIGTAKPTREEQELYPHHLIDIITPLEVYSAAQFVEDACALIDEMHSRGKTPILVGGTMLYFKALLEGLSSNLPSADANVRAAIEEKAANEGWQAVYDELVAVDPAAGVKFKVSDKQRIIRALEVYHITGQPITKLQAEQPKNVPYRYTFHNYALLPDRVELHQRIEQRLSKMWDIGFLSEVESLIEKYDLDENLPSMRSVGYRQALEFLLKSDMSLKKKQEMEDKALFATRQLAKRQYTWLRSLQEIHDFKTYLTIKQAKEDLRNSYG.

12–19 (GPTASGKT) contacts ATP. A substrate-binding site is contributed by 14–19 (TASGKT). Interaction with substrate tRNA regions lie at residues 37–40 (DSAL) and 162–166 (QRIIR).

It belongs to the IPP transferase family. In terms of assembly, monomer. The cofactor is Mg(2+).

The enzyme catalyses adenosine(37) in tRNA + dimethylallyl diphosphate = N(6)-dimethylallyladenosine(37) in tRNA + diphosphate. Catalyzes the transfer of a dimethylallyl group onto the adenine at position 37 in tRNAs that read codons beginning with uridine, leading to the formation of N6-(dimethylallyl)adenosine (i(6)A). In Acinetobacter baumannii (strain SDF), this protein is tRNA dimethylallyltransferase.